A 163-amino-acid polypeptide reads, in one-letter code: Probable phosphotransferase enzyme IIB component M6_Spy0801 (163 aa).

The PTS EIIB type-4 domain maps to 1-163; that stretch reads MITQIRVDDR…TKVHLSQLVN (163 aa). His-13 (pros-phosphohistidine intermediate) is an active-site residue.

It is found in the cytoplasm. In terms of biological role, the phosphoenolpyruvate-dependent sugar phosphotransferase system (sugar PTS), a major carbohydrate active -transport system, catalyzes the phosphorylation of incoming sugar substrates concomitantly with their translocation across the cell membrane. The sequence is that of Probable phosphotransferase enzyme IIB component M6_Spy0801 from Streptococcus pyogenes serotype M6 (strain ATCC BAA-946 / MGAS10394).